Here is a 422-residue protein sequence, read N- to C-terminus: Metallocarboxypeptidase A (422 aa).

A signal peptide spans 1–17 (MRSVLSFALLAANVVSA). Residues 18-112 (AVLAPFDYSG…FEAYSAGYAP (95 aa)) constitute a propeptide, activation peptide. The 301-residue stretch at 119 to 419 (SYHSYQDHLS…AGTVAMLKAV (301 aa)) folds into the Peptidase M14 domain. Positions 179 and 182 each coordinate Zn(2+). Residues 179–182 (HARE), R237, and 254–255 (NR) each bind substrate. A disulfide bond links C248 and C271. A Zn(2+)-binding site is contributed by H309. 310–311 (SY) contacts substrate. The active-site Proton donor/acceptor is the E385.

Belongs to the peptidase M14 family. Requires Zn(2+) as cofactor.

It is found in the secreted. Extracellular metalloprotease that contributes to pathogenicity. This Arthroderma otae (strain ATCC MYA-4605 / CBS 113480) (Microsporum canis) protein is Metallocarboxypeptidase A (MCPA).